A 392-amino-acid polypeptide reads, in one-letter code: MVLLSILRILFLCELVLFMEHRAQMAEGGQSSIALLAEAPTLPLIEELLEESPGEQPRKPRLLGHSLRYMLELYRRSADSHGHPRENRTIGATMVRLVKPLTNVARPHRGTWHIQILGFPLRPNRGLYQLVRATVVYRHHLQLTRFNLSCHVEPWVQKNPTNHFPSSEGDSSKPSLMSNAWKEMDITQLVQQRFWNNKGHRILRLRFMCQQQKDSGGLELWHGTSSLDIAFLLLYFNDTHKSIRKAKFLPRGMEEFMERESLLRRTRQADGISAEVTASSSKHSGPENNQCSLHPFQISFRQLGWDHWIIAPPFYTPNYCKGTCLRVLRDGLNSPNHAIIQNLINQLVDQSVPRPSCVPYKYVPISVLMIEANGSILYKEYEGMIAESCTCR.

The signal sequence occupies residues 1–18 (MVLLSILRILFLCELVLF). Positions 19 to 267 (MEHRAQMAEG…ERESLLRRTR (249 aa)) are excised as a propeptide. Asn-87, Asn-147, and Asn-237 each carry an N-linked (GlcNAc...) asparagine glycan. Residue Gln-268 is modified to Pyrrolidone carboxylic acid; in P16 and P17. Ser-273 bears the Phosphoserine; in P16 mark. Thr-277 carries an O-linked (HexNAc...) threonine; in P17 glycan. Disulfide bonds link Cys-291-Cys-357, Cys-320-Cys-389, and Cys-324-Cys-391. Asn-373 carries N-linked (GlcNAc...) asparagine glycosylation.

It belongs to the TGF-beta family. In terms of assembly, homodimer. But, in contrast to other members of this family, cannot be disulfide-linked.

Its subcellular location is the secreted. Functionally, may be involved in follicular development. Oocyte-specific growth/differentiation factor that stimulates folliculogenesis and granulosa cell (GC) growth. The sequence is that of Bone morphogenetic protein 15 (BMP15) from Homo sapiens (Human).